The sequence spans 142 residues: Phenylalanine ammonia-lyase (142 aa).

Residues lysine 66, glutamate 94, and asparagine 97 each coordinate (E)-cinnamate.

It belongs to the PAL/histidase family. Homotetramer. Post-translationally, contains an active site 4-methylidene-imidazol-5-one (MIO), which is formed autocatalytically by cyclization and dehydration of residues Ala-Ser-Gly.

It is found in the cytoplasm. It catalyses the reaction L-phenylalanine = (E)-cinnamate + NH4(+). It functions in the pathway phenylpropanoid metabolism; trans-cinnamate biosynthesis; trans-cinnamate from L-phenylalanine: step 1/1. Functionally, catalyzes the non-oxidative deamination of L-phenylalanine to form trans-cinnamic acid and a free ammonium ion. Facilitates the commitment step in phenylpropanoid pathways that produce secondary metabolites such as lignins, coumarins and flavonoids. The polypeptide is Phenylalanine ammonia-lyase (palA) (Agaricus bisporus (White button mushroom)).